A 123-amino-acid chain; its full sequence is Holo-[acyl-carrier-protein] synthase (123 aa).

The Mg(2+) site is built by D8 and E60.

Belongs to the P-Pant transferase superfamily. AcpS family. The cofactor is Mg(2+).

It localises to the cytoplasm. It carries out the reaction apo-[ACP] + CoA = holo-[ACP] + adenosine 3',5'-bisphosphate + H(+). Its function is as follows. Transfers the 4'-phosphopantetheine moiety from coenzyme A to a Ser of acyl-carrier-protein. The sequence is that of Holo-[acyl-carrier-protein] synthase from Ehrlichia ruminantium (strain Welgevonden).